We begin with the raw amino-acid sequence, 88 residues long: LYR motif-containing protein 2 (88 aa).

The transit peptide at 1-19 directs the protein to the mitochondrion; it reads MAASRLPPATLTLKQFVRR.

The protein belongs to the complex I LYR family.

The protein localises to the mitochondrion. Its function is as follows. Involved in efficient integration of the N-module into mitochondrial respiratory chain complex I. In Homo sapiens (Human), this protein is LYR motif-containing protein 2 (LYRM2).